Reading from the N-terminus, the 141-residue chain is Cystatin (141 aa).

The first 26 residues, 1 to 26, serve as a signal peptide directing secretion; sequence MVHSQLPVAAPLRLLCALLLLPSATM. In terms of domain architecture, Cystatin spans 29-129; the sequence is GGLYPRSVTD…CHFQVWSRPW (101 aa). Residues 73-77 carry the Secondary area of contact motif; that stretch reads QVVTG. 2 disulfide bridges follow: Cys91–Cys107 and Cys120–Cys140.

This sequence belongs to the cystatin family. As to expression, expressed by the venom gland at an extremely low level (at protein level).

Its subcellular location is the secreted. Functionally, inhibits various C1 cysteine proteases including cathepsin L, papain and cathepsin B. This protein has no toxic activity and its function in the venom is unknown. It may play a role as a housekeeping or regulatory protein. The polypeptide is Cystatin (Tropidechis carinatus (Australian rough-scaled snake)).